Reading from the N-terminus, the 353-residue chain is Delta-aminolevulinic acid dehydratase (353 aa).

Lysine 221 serves as the catalytic Schiff-base intermediate with substrate. 5-aminolevulinate is bound by residues arginine 231 and lysine 244. Glutamate 260 is a binding site for Mg(2+). The active-site Schiff-base intermediate with substrate is lysine 275. 5-aminolevulinate is bound by residues serine 301 and tyrosine 340.

This sequence belongs to the ALAD family. Homooctamer. Mg(2+) serves as cofactor.

The enzyme catalyses 2 5-aminolevulinate = porphobilinogen + 2 H2O + H(+). It functions in the pathway porphyrin-containing compound metabolism; protoporphyrin-IX biosynthesis; coproporphyrinogen-III from 5-aminolevulinate: step 1/4. Catalyzes an early step in the biosynthesis of tetrapyrroles. Binds two molecules of 5-aminolevulinate per subunit, each at a distinct site, and catalyzes their condensation to form porphobilinogen. Required for nodule development. The protein is Delta-aminolevulinic acid dehydratase (hemB) of Bradyrhizobium diazoefficiens (strain JCM 10833 / BCRC 13528 / IAM 13628 / NBRC 14792 / USDA 110).